An 853-amino-acid chain; its full sequence is E3 ubiquitin-protein ligase RNF216 (853 aa).

Disordered stretches follow at residues 33 to 102 (TISD…DDIV), 125 to 152 (PLEV…ASVD), and 165 to 228 (PYFQ…AHPL). Acidic residues predominate over residues 53–73 (QQEDDLDDDVILTEDDSEDEY). Lys-89 participates in a covalent cross-link: Glycyl lysine isopeptide (Lys-Gly) (interchain with G-Cter in SUMO2). Residues Lys-339 and Lys-342 each participate in a glycyl lysine isopeptide (Lys-Gly) (interchain with G-Cter in SUMO2) cross-link. The residue at position 407 (Ser-407) is a Phosphoserine. Residues Lys-413, Lys-418, Lys-436, Lys-447, and Lys-473 each participate in a glycyl lysine isopeptide (Lys-Gly) (interchain with G-Cter in SUMO2) cross-link. Residues 463-479 (VKQEQEFYEQKIKEMAE) adopt a coiled-coil conformation. Residues 499–716 (QLIECRCCYG…SPGAPCQECS (218 aa)) form a TRIAD supradomain region. Residues Cys-503, Cys-506, Cys-525, Cys-528, Cys-593, and Cys-596 each contribute to the Zn(2+) site. Residues 503–552 (CRCCYGEFPFEELTQCADAHLFCKECLIRYAQEAVFGSGKSELSCMEGSC) form an RING-type 1 zinc finger. Residues 571–636 (YKYYERKAEE…LWKEHNGLTC (66 aa)) form an IBR-type zinc finger. Lys-607 participates in a covalent cross-link: Glycyl lysine isopeptide (Lys-Gly) (interchain with G-Cter in SUMO2). Zn(2+) contacts are provided by Cys-611, Cys-616, Cys-621, Cys-624, His-631, and Cys-636. Glycyl lysine isopeptide (Lys-Gly) (interchain with G-Cter in SUMO2) cross-links involve residues Lys-646 and Lys-654. The Zn(2+) site is built by Cys-663 and Cys-666. An RING-type 2; atypical zinc finger spans residues 663–691 (CHKCGTGLIKSEGCNRMSCRCGAQMCYLC). Cys-676 is a catalytic residue. Positions 681, 683, 688, 691, 704, and 712 each coordinate Zn(2+). The stretch at 725–751 (TEDDEKLIEEIQKEAEEEQKRKNGENT) forms a coiled coil. Glycyl lysine isopeptide (Lys-Gly) (interchain with G-Cter in SUMO2) cross-links involve residues Lys-753 and Lys-761.

Interacts with UBE2L3 and to some extent with UBE2L6. Interacts with TRAF3, TLR3, TLR4, TLR5 and TLR9. Isoform 3/ZIN binds RIPK1. In terms of processing, auto-ubiquitinated. Post-translationally, phosphorylation at Ser-719 enhances acceptor ubiquitin binding and chain-type specificity towards 'Lys-63' di-ubiquitin but not di-ubiquitin with other linkage types.

The protein resides in the cytoplasm. It is found in the cytoplasmic vesicle. The protein localises to the clathrin-coated vesicle. It carries out the reaction S-ubiquitinyl-[E2 ubiquitin-conjugating enzyme]-L-cysteine + [acceptor protein]-L-lysine = [E2 ubiquitin-conjugating enzyme]-L-cysteine + N(6)-ubiquitinyl-[acceptor protein]-L-lysine.. It functions in the pathway protein modification; protein ubiquitination. With respect to regulation, allosterically activated by 'Lys-63'-linked di-ubiquitin. Functionally, E3 ubiquitin ligase which accepts ubiquitin from specific E2 ubiquitin-conjugating enzymes, and then transfers it to substrates promoting their ubiquitination. Plays a role in the regulation of antiviral responses by promoting the degradation of TRAF3, TLR4 and TLR9. In turn, down-regulates NF-kappa-B and IRF3 activation as well as beta interferon production. Also participates in the regulation of autophagy by ubiquitinating BECN1 leading to its degradation and autophagy inhibition. Plays a role in ARC-dependent synaptic plasticity by mediating ARC ubiquitination resulting in its rapid proteasomal degradation. Plays aso an essential role in spermatogenesis and male fertility. Mechanistically, regulates meiosis by promoting the degradation of PRKACB through the ubiquitin-mediated lysosome pathway. Modulates the gonadotropin-releasing hormone signal pathway by affecting the stability of STAU2 that is required for the microtubule-dependent transport of neuronal RNA from the cell body to the dendrite. This Mus musculus (Mouse) protein is E3 ubiquitin-protein ligase RNF216 (Rnf216).